Consider the following 156-residue polypeptide: Small ribosomal subunit protein uS7c (156 aa).

This sequence belongs to the universal ribosomal protein uS7 family. Part of the 30S ribosomal subunit.

The protein resides in the plastid. The protein localises to the chloroplast. In terms of biological role, one of the primary rRNA binding proteins, it binds directly to 16S rRNA where it nucleates assembly of the head domain of the 30S subunit. In Stangeria eriopus (Natal grass cycad), this protein is Small ribosomal subunit protein uS7c (rps7).